We begin with the raw amino-acid sequence, 202 residues long: ATP-dependent Clp protease proteolytic subunit (202 aa).

The active-site Nucleophile is Ser-101. His-126 is an active-site residue.

It belongs to the peptidase S14 family. Component of the chloroplastic Clp protease core complex.

It localises to the plastid. Its subcellular location is the chloroplast stroma. The enzyme catalyses Hydrolysis of proteins to small peptides in the presence of ATP and magnesium. alpha-casein is the usual test substrate. In the absence of ATP, only oligopeptides shorter than five residues are hydrolyzed (such as succinyl-Leu-Tyr-|-NHMec, and Leu-Tyr-Leu-|-Tyr-Trp, in which cleavage of the -Tyr-|-Leu- and -Tyr-|-Trp bonds also occurs).. Its function is as follows. Cleaves peptides in various proteins in a process that requires ATP hydrolysis. Has a chymotrypsin-like activity. Plays a major role in the degradation of misfolded proteins. The chain is ATP-dependent Clp protease proteolytic subunit from Liriodendron tulipifera (Tuliptree).